Reading from the N-terminus, the 218-residue chain is UPF0502 protein VS_II0353 (218 aa).

Belongs to the UPF0502 family.

The sequence is that of UPF0502 protein VS_II0353 from Vibrio atlanticus (strain LGP32) (Vibrio splendidus (strain Mel32)).